The chain runs to 266 residues: Ras-like protein family member 12 (266 aa).

GTP-binding positions include 27 to 34, 74 to 78, and 134 to 137; these read GRRGAGKS, DTADL, and NKLD.

The protein belongs to the small GTPase superfamily. Ras family.

The enzyme catalyses GTP + H2O = GDP + phosphate + H(+). In Mus musculus (Mouse), this protein is Ras-like protein family member 12 (Rasl12).